We begin with the raw amino-acid sequence, 513 residues long: ATP synthase subunit alpha (513 aa).

169–176 (GDRQTGKT) contributes to the ATP binding site.

Belongs to the ATPase alpha/beta chains family. In terms of assembly, F-type ATPases have 2 components, CF(1) - the catalytic core - and CF(0) - the membrane proton channel. CF(1) has five subunits: alpha(3), beta(3), gamma(1), delta(1), epsilon(1). CF(0) has three main subunits: a(1), b(2) and c(9-12). The alpha and beta chains form an alternating ring which encloses part of the gamma chain. CF(1) is attached to CF(0) by a central stalk formed by the gamma and epsilon chains, while a peripheral stalk is formed by the delta and b chains.

It is found in the cell membrane. It carries out the reaction ATP + H2O + 4 H(+)(in) = ADP + phosphate + 5 H(+)(out). Its function is as follows. Produces ATP from ADP in the presence of a proton gradient across the membrane. The alpha chain is a regulatory subunit. The polypeptide is ATP synthase subunit alpha (Polynucleobacter asymbioticus (strain DSM 18221 / CIP 109841 / QLW-P1DMWA-1) (Polynucleobacter necessarius subsp. asymbioticus)).